A 333-amino-acid chain; its full sequence is tRNA(Ile)-lysidine synthase (333 aa).

33–38 (SGGADS) is an ATP binding site.

The protein belongs to the tRNA(Ile)-lysidine synthase family.

It localises to the cytoplasm. The catalysed reaction is cytidine(34) in tRNA(Ile2) + L-lysine + ATP = lysidine(34) in tRNA(Ile2) + AMP + diphosphate + H(+). In terms of biological role, ligates lysine onto the cytidine present at position 34 of the AUA codon-specific tRNA(Ile) that contains the anticodon CAU, in an ATP-dependent manner. Cytidine is converted to lysidine, thus changing the amino acid specificity of the tRNA from methionine to isoleucine. In Salinispora arenicola (strain CNS-205), this protein is tRNA(Ile)-lysidine synthase.